The primary structure comprises 656 residues: DNA ligase (656 aa).

NAD(+) is bound by residues 32-36 (DAVYD) and 81-82 (SL). Catalysis depends on lysine 112, which acts as the N6-AMP-lysine intermediate. The NAD(+) site is built by arginine 133, glutamate 167, and lysine 306. The Zn(2+) site is built by cysteine 400, cysteine 403, cysteine 416, and cysteine 421. One can recognise a BRCT domain in the interval 577-656 (KSSSVFNNKT…ELLKRLKELD (80 aa)).

This sequence belongs to the NAD-dependent DNA ligase family. LigA subfamily. Requires Mg(2+) as cofactor. Mn(2+) serves as cofactor.

The catalysed reaction is NAD(+) + (deoxyribonucleotide)n-3'-hydroxyl + 5'-phospho-(deoxyribonucleotide)m = (deoxyribonucleotide)n+m + AMP + beta-nicotinamide D-nucleotide.. In terms of biological role, DNA ligase that catalyzes the formation of phosphodiester linkages between 5'-phosphoryl and 3'-hydroxyl groups in double-stranded DNA using NAD as a coenzyme and as the energy source for the reaction. It is essential for DNA replication and repair of damaged DNA. The protein is DNA ligase of Helicobacter pylori (strain P12).